Here is a 1053-residue protein sequence, read N- to C-terminus: MGPGPCRVPRAPGWLLRALALMVAACGRVAFAFNLDTRFLVVKEAVNPGSLFGYSVALHRQTERQQRYLLLAGAPRDLAVGDDYTNRTGAVYLCPLTAHKDDCERMDISEKSDPDHHIIEDMWLGVTVASQGPAGRVLVCAHRYTKVLWSGLEDQRRMVGKCYVRGNDLQLDPGDDWQTYHNEMCNSNTDYLQTGMCQLGTSGGFTQNTVYFGAPGAYNWKGNSYMIQRKDWDLSEYSYRGSEEQGNLYIGYTVQVGNAILHPTDIITVVTGAPRHQHMGAVFLLKQESGGDLQRKQVLKGTQVGAYFGSAIALADLNNDGWQDLLVGAPYYFERKEEVGGAVYVFMNQAGASFPDQPSLLLHGPSRSAFGISIASIGDINQDGFQDIAVGAPFEGLGKVYIYHSSSGGLLRQPQQIIHGEKLGLPGLATFGYSLSGKMDVDENLYPDLLVGSLSDHIVLLRARPVINILHRTLVARPAVLDPALCTATSCVQVELCFAYNQSAGNPNYRRNITLAYTLEADRDRRPPRLRFARSQSSVFHGFFSMPETHCQTLELLLMDNVRDKLRPIVIAMNYSLPLRMPDRLKLGLRSLDAYPVLNQAQAMENHTEVHFQKECGPDNKCDSNLQMRAAFLSEQLQPLSRLQYSRDTKKLFLSINVTNSPSSQRAGEDAHEALLTLEVPSALLLSSVRPSGTCQANNETILCELGNPFKRNQRMELLIAFEVIGVTLHTRDLPVLLQLSTSSHQDNLQPVLLTLQVDYTLQASLSLMNHRLQSFFGGTVMGEAAMKTAEDVGSPLKYEFQVSPVGDGLAALGTLVLGLEWPYEVTNGKWLLYPTEITIHSNGSWPCQPSGNLVNPLNLTLSDPGVTPLSPQRRRRQLDPGGDQSSPPVTLAAAKKAKSETVLTCSNGRARCVWLECPLPDTSNITNVTVKARVWNSTFIEDYKDFDRVRVDGWATLFLRTSIPTINMENKTTWFSVDIDSELVEELPAEIELWLVLVAVGAGLLLLGLIILLLWKCGFFKRARTRALYEAKRQKAEMKSQPSETERLTDDY.

An N-terminal signal peptide occupies residues 1 to 32 (MGPGPCRVPRAPGWLLRALALMVAACGRVAFA). Topologically, residues 33-993 (FNLDTRFLVV…LVEELPAEIE (961 aa)) are extracellular. FG-GAP repeat units follow at residues 38 to 103 (RFLV…KDDC), 110 to 171 (EKSD…DLQL), 185 to 235 (CNSN…WDLS), 236 to 293 (EYSY…GGDL), 294 to 355 (QRKQ…ASFP), 357 to 412 (QPSL…GLLR), and 416 to 478 (QIIH…VARP). The N-linked (GlcNAc...) asparagine glycan is linked to N86. 3 disulfide bridges follow: C94–C103, C140–C162, and C185–C197. 2 disulfide bridges follow: C486–C491 and C497–C551. N501, N512, N574, and N606 each carry an N-linked (GlcNAc...) asparagine glycan. The cysteines at positions 616 and 622 are disulfide-linked. N657, N699, N843, and N859 each carry an N-linked (GlcNAc...) asparagine glycan. C695 and C704 form a disulfide bridge. Intrachain disulfides connect C848/C906 and C913/C918. Residues 865-890 (PGVTPLSPQRRRRQLDPGGDQSSPPV) form a disordered region. Residues N925, N928, N937, and N971 are each glycosylated (N-linked (GlcNAc...) asparagine). A helical transmembrane segment spans residues 994 to 1021 (LWLVLVAVGAGLLLLGLIILLLWKCGFF). C1018 carries the S-palmitoyl cysteine lipid modification. At 1022–1053 (KRARTRALYEAKRQKAEMKSQPSETERLTDDY) the chain is on the cytoplasmic side.

It belongs to the integrin alpha chain family. In terms of assembly, heterodimer of an alpha and a beta subunit. The alpha subunit is composed of a heavy and a light chain linked by a disulfide bond. Alpha-3 associates with beta-1. Interacts with HPS5. Interacts with FAP (seprase); the interaction occurs at the cell surface of invadopodia membrane in a collagen-dependent manner. Isoform 1 and isoform 2 are expressed in heart and brain. Only isoform 1 is detected in lung.

It is found in the cell membrane. Its subcellular location is the cell projection. The protein localises to the invadopodium membrane. It localises to the filopodium membrane. Functionally, integrin alpha-3/beta-1 is a receptor for fibronectin, laminin, collagen, epiligrin, thrombospondin and CSPG4. Integrin alpha-3/beta-1 provides a docking site for FAP (seprase) at invadopodia plasma membranes in a collagen-dependent manner and hence may participate in the adhesion, formation of invadopodia and matrix degradation processes, promoting cell invasion. Alpha-3/beta-1 may mediate with LGALS3 the stimulation by CSPG4 of endothelial cells migration. This is Integrin alpha-3 (Itga3) from Mus musculus (Mouse).